The chain runs to 207 residues: Thiamine-phosphate synthase (207 aa).

4-amino-2-methyl-5-(diphosphooxymethyl)pyrimidine is bound by residues 37-41 (QLREK) and Asn69. Residues Asp70 and Asp89 each contribute to the Mg(2+) site. Ser108 contacts 4-amino-2-methyl-5-(diphosphooxymethyl)pyrimidine. 134–136 (TGS) contributes to the 2-[(2R,5Z)-2-carboxy-4-methylthiazol-5(2H)-ylidene]ethyl phosphate binding site. Lys137 is a binding site for 4-amino-2-methyl-5-(diphosphooxymethyl)pyrimidine. Residues Gly165 and 185 to 186 (IS) contribute to the 2-[(2R,5Z)-2-carboxy-4-methylthiazol-5(2H)-ylidene]ethyl phosphate site.

The protein belongs to the thiamine-phosphate synthase family. Requires Mg(2+) as cofactor.

It carries out the reaction 2-[(2R,5Z)-2-carboxy-4-methylthiazol-5(2H)-ylidene]ethyl phosphate + 4-amino-2-methyl-5-(diphosphooxymethyl)pyrimidine + 2 H(+) = thiamine phosphate + CO2 + diphosphate. The enzyme catalyses 2-(2-carboxy-4-methylthiazol-5-yl)ethyl phosphate + 4-amino-2-methyl-5-(diphosphooxymethyl)pyrimidine + 2 H(+) = thiamine phosphate + CO2 + diphosphate. The catalysed reaction is 4-methyl-5-(2-phosphooxyethyl)-thiazole + 4-amino-2-methyl-5-(diphosphooxymethyl)pyrimidine + H(+) = thiamine phosphate + diphosphate. It participates in cofactor biosynthesis; thiamine diphosphate biosynthesis; thiamine phosphate from 4-amino-2-methyl-5-diphosphomethylpyrimidine and 4-methyl-5-(2-phosphoethyl)-thiazole: step 1/1. Functionally, condenses 4-methyl-5-(beta-hydroxyethyl)thiazole monophosphate (THZ-P) and 2-methyl-4-amino-5-hydroxymethyl pyrimidine pyrophosphate (HMP-PP) to form thiamine monophosphate (TMP). The sequence is that of Thiamine-phosphate synthase from Desulfitobacterium hafniense (strain DSM 10664 / DCB-2).